We begin with the raw amino-acid sequence, 693 residues long: Guanyl-specific ribonuclease pgl-3 (693 aa).

The involved in dimerization stretch occupies residues 205 to 447; that stretch reads KKLMIEGPKI…VNRIIESLEK (243 aa). The active-site Proton acceptor is the His437. Disordered stretches follow at residues 445–468, 523–591, and 620–693; these read LEKSSSSEPSATAKQTTTSNGPTT, AEKN…DATP, and SSNG…RGGS. A compositionally biased stretch (low complexity) spans 447–468; it reads KSSSSEPSATAKQTTTSNGPTT. 2 stretches are compositionally biased toward polar residues: residues 528 to 548 and 569 to 580; these read NTPSTASPVQFSSDGWDSPTK and ITKVSPQPQERT. Residues 581-614 are required for interaction with sepa-1; it reads GTAWGSGDATPVPLATPVNEYKVSGFGAAPVASG. Composition is skewed to gly residues over residues 625 to 634, 641 to 660, and 668 to 693; these read SGRGSYGGGR, RGAYGGDRGRGGSGDGSRGY, and RGSYGEGSRGYQGGRAGFFGGSRGGS. The RNA-binding RGG-box stretch occupies residues 633 to 693; the sequence is GRGGDRGGRG…GFFGGSRGGS (61 aa).

In terms of assembly, may form a homodimer. Interacts with pgl-1 and pgl-2; this association is not required for P-granule localization of either pgl-1 or pgl-2. Interacts with sepa-1; the interaction is enhanced in the presence of RNA. Interacts with prmt-1; the interaction is direct. Post-translationally, methylated at arginine residues in the RNA-binding RGG-box by prmt-1. Methylation promotes P-granule degradation by autophagy. In terms of tissue distribution, highly expressed in the germline. Expressed in most somatic cells.

Its subcellular location is the cytoplasmic granule. It carries out the reaction [RNA] containing guanosine + H2O = an [RNA fragment]-3'-guanosine-3'-phosphate + a 5'-hydroxy-ribonucleotide-3'-[RNA fragment].. Functionally, guanyl-specific endoribonuclease which cleaves the phosphodiester bond in single-stranded RNA between the 3'-guanylic residue and the 5'-OH residue of adjacent nucleotide, resulting in the formation of a corresponding 2',3'-cyclic phosphate intermediate. P-granule component involved in germline development. Together with the P-granule component pgl-1, is involved in the formation of P-granules. Together with pgl-1, probably recruits other granule components such as pos-1, mex-3 and glh-1, and RNA to P-granules. In vitro, binds mRNA; this interaction is required for the formation of liquid-like droplets that resemble P-granules. Most likely recruits pgl-1 into P-granules during autophagy. Associates with adapters such as sepa-1 and is required for the accumulation and degradation of P-granules by autophagy in somatic cells. This ensures exclusive localization of the P-granules in germ cells. In addition, may act redundantly with pgl-1 to protect germ cells from excessive germline apoptosis during normal oogenesis and development of the two gonadal arms. This may in part be through regulating the localization of sir-2.1 which is involved in germ cell apoptosis. May protect somatic cells from excessive apoptosis during normal development. This Caenorhabditis elegans protein is Guanyl-specific ribonuclease pgl-3.